The sequence spans 295 residues: 33 kDa chaperonin (295 aa).

2 disulfides stabilise this stretch: Cys-236–Cys-238 and Cys-269–Cys-272.

The protein belongs to the HSP33 family. Under oxidizing conditions two disulfide bonds are formed involving the reactive cysteines. Under reducing conditions zinc is bound to the reactive cysteines and the protein is inactive.

The protein resides in the cytoplasm. Its function is as follows. Redox regulated molecular chaperone. Protects both thermally unfolding and oxidatively damaged proteins from irreversible aggregation. Plays an important role in the bacterial defense system toward oxidative stress. This chain is 33 kDa chaperonin, found in Geobacter sp. (strain M21).